A 524-amino-acid chain; its full sequence is Dihydromonacolin L monooxygenase mokC (524 aa).

The Cytoplasmic portion of the chain corresponds to 1–25; sequence MTVPTDTVSRRLQSLAWSDIKQHAP. A helical; Signal-anchor for type II membrane protein membrane pass occupies residues 26–47; that stretch reads WLPSSRTLVSGFLCLILLQILY. Residues 48-524 are Lumenal-facing; it reads SRGRKSDLRV…LMMRRRDEDL (477 aa). N-linked (GlcNAc...) asparagine glycosylation is found at Asn-396 and Asn-401. Cys-467 is a binding site for heme.

Belongs to the cytochrome P450 family. Heme is required as a cofactor.

Its subcellular location is the endoplasmic reticulum membrane. The enzyme catalyses dihydromonacolin L carboxylate + reduced [NADPH--hemoprotein reductase] + O2 = monacolin L carboxylate + oxidized [NADPH--hemoprotein reductase] + 2 H2O + H(+). It carries out the reaction monacolin L carboxylate + reduced [NADPH--hemoprotein reductase] + O2 = monacolin J carboxylate + oxidized [NADPH--hemoprotein reductase] + H2O + H(+). It participates in polyketide biosynthesis; lovastatin biosynthesis. Functionally, cytochrome P450 monooxygenase; part of the gene cluster that mediates the biosynthesis of monakolin K, also known as lovastatin, and which acts as a potent competitive inhibitor of HMG-CoA reductase. Monakolin K biosynthesis is performed in two stages. The first stage is catalyzed by the nonaketide synthase mokA, which belongs to type I polyketide synthases and catalyzes the iterative nine-step formation of the polyketide. This PKS stage is completed by the action of dehydrogenase mokE, which catalyzes the NADPH-dependent reduction of the unsaturated tetra-, penta- and heptaketide intermediates that arise during the mokA-mediated biosynthesis of the nonaketide chain and leads to dihydromonacolin L. Covalently bound dihydromonacolin L is released from mokA by the mokD esterase. Conversion of dihydromonacolin L into monacolin L and then monacolin J is subsequently performed with the participation of molecular oxygen and P450 monoogygenase mokC. Finally, mokF performs the conversion of monacoline J to monacoline K through the addition of the side-chain diketide moiety (2R)-2-methylbutanoate produced by the diketide synthase mokB. The protein is Dihydromonacolin L monooxygenase mokC of Monascus pilosus (Red mold).